Reading from the N-terminus, the 120-residue chain is Large ribosomal subunit protein bL20 (120 aa).

This sequence belongs to the bacterial ribosomal protein bL20 family.

Its function is as follows. Binds directly to 23S ribosomal RNA and is necessary for the in vitro assembly process of the 50S ribosomal subunit. It is not involved in the protein synthesizing functions of that subunit. The polypeptide is Large ribosomal subunit protein bL20 (Novosphingobium aromaticivorans (strain ATCC 700278 / DSM 12444 / CCUG 56034 / CIP 105152 / NBRC 16084 / F199)).